The chain runs to 389 residues: Succinyl-diaminopimelate desuccinylase (389 aa).

His-72 provides a ligand contact to Zn(2+). The active site involves Asp-74. A Zn(2+)-binding site is contributed by Asp-105. Residue Glu-144 is the Proton acceptor of the active site. Positions 145, 173, and 362 each coordinate Zn(2+).

It belongs to the peptidase M20A family. DapE subfamily. In terms of assembly, homodimer. Requires Zn(2+) as cofactor. It depends on Co(2+) as a cofactor.

It catalyses the reaction N-succinyl-(2S,6S)-2,6-diaminopimelate + H2O = (2S,6S)-2,6-diaminopimelate + succinate. The protein operates within amino-acid biosynthesis; L-lysine biosynthesis via DAP pathway; LL-2,6-diaminopimelate from (S)-tetrahydrodipicolinate (succinylase route): step 3/3. Catalyzes the hydrolysis of N-succinyl-L,L-diaminopimelic acid (SDAP), forming succinate and LL-2,6-diaminopimelate (DAP), an intermediate involved in the bacterial biosynthesis of lysine and meso-diaminopimelic acid, an essential component of bacterial cell walls. This chain is Succinyl-diaminopimelate desuccinylase, found in Rhodopseudomonas palustris (strain HaA2).